The chain runs to 1357 residues: DNA-directed RNA polymerase subunit beta (1357 aa).

This sequence belongs to the RNA polymerase beta chain family. In terms of assembly, the RNAP catalytic core consists of 2 alpha, 1 beta, 1 beta' and 1 omega subunit. When a sigma factor is associated with the core the holoenzyme is formed, which can initiate transcription.

The enzyme catalyses RNA(n) + a ribonucleoside 5'-triphosphate = RNA(n+1) + diphosphate. DNA-dependent RNA polymerase catalyzes the transcription of DNA into RNA using the four ribonucleoside triphosphates as substrates. In Pseudomonas entomophila (strain L48), this protein is DNA-directed RNA polymerase subunit beta.